Consider the following 158-residue polypeptide: SsrA-binding protein (158 aa).

Residues 135-158 form a disordered region; sequence DKRKTLKDRDWERDKQRGFKKDLD. Residues 141-158 show a composition bias toward basic and acidic residues; sequence KDRDWERDKQRGFKKDLD.

Belongs to the SmpB family.

It is found in the cytoplasm. Functionally, required for rescue of stalled ribosomes mediated by trans-translation. Binds to transfer-messenger RNA (tmRNA), required for stable association of tmRNA with ribosomes. tmRNA and SmpB together mimic tRNA shape, replacing the anticodon stem-loop with SmpB. tmRNA is encoded by the ssrA gene; the 2 termini fold to resemble tRNA(Ala) and it encodes a 'tag peptide', a short internal open reading frame. During trans-translation Ala-aminoacylated tmRNA acts like a tRNA, entering the A-site of stalled ribosomes, displacing the stalled mRNA. The ribosome then switches to translate the ORF on the tmRNA; the nascent peptide is terminated with the 'tag peptide' encoded by the tmRNA and targeted for degradation. The ribosome is freed to recommence translation, which seems to be the essential function of trans-translation. This is SsrA-binding protein from Psychrobacter cryohalolentis (strain ATCC BAA-1226 / DSM 17306 / VKM B-2378 / K5).